The primary structure comprises 155 residues: Snaclec bothrojaracin subunit alpha (155 aa).

A signal peptide spans 1-23; sequence MGRFLFVSFGLLVVFLSLSGTAA. Intrachain disulfides connect C25-C36, C53-C150, and C125-C142. In terms of domain architecture, C-type lectin spans 32–151; the sequence is HEGHCYKFFQ…CGQQNPFVCK (120 aa).

This sequence belongs to the snaclec family. As to quaternary structure, heterodimer of subunits alpha and beta; disulfide-linked. Expressed by the venom gland.

It localises to the secreted. Its function is as follows. This potent antithrombotic agent acts in a calcium-independent manner. Exerts its anticoagulant effect by two distinct mechanisms. It binds to activated thrombin through exosite 1, blocking fibrinogen clotting, platelet activation, factor V activation and other effects, and it interacts with prothrombin (F2), decreasing its proteolytic activation -especially in the presence of factor Va. In vivo, intravenous injection before thrombosis induction causes a significant decrease in thrombus weight. Furthermore, BJC shows a prolonged effect by remaining in the plasma bound to prothrombin for at least 12 hours. This is Snaclec bothrojaracin subunit alpha from Bothrops jararaca (Jararaca).